We begin with the raw amino-acid sequence, 105 residues long: ATP-dependent Clp protease adapter protein ClpS (105 aa).

The protein belongs to the ClpS family. As to quaternary structure, binds to the N-terminal domain of the chaperone ClpA.

Its function is as follows. Involved in the modulation of the specificity of the ClpAP-mediated ATP-dependent protein degradation. This chain is ATP-dependent Clp protease adapter protein ClpS, found in Prochlorococcus marinus (strain MIT 9515).